A 212-amino-acid chain; its full sequence is ER lumen protein-retaining receptor 2 (212 aa).

Over 1 to 4 the chain is Lumenal; sequence MNVF. The helical transmembrane segment at 5–24 threads the bilayer; that stretch reads RLSGDLSHLAAIIILLLKIW. Over 25 to 32 the chain is Cytoplasmic; sequence KSRSCAGI. Residues 33–52 form a helical membrane-spanning segment; that stretch reads SGKSQLLFALVFTTRYLDLL. Residues 47 to 48 are interaction with the K-D-E-L motif on target proteins; it reads RY. Residues 53–58 lie on the Lumenal side of the membrane; sequence TSFISL. A helical transmembrane segment spans residues 59–79; it reads YNTSMKVIYIGCAYATVYLIY. The Cytoplasmic segment spans residues 80 to 92; sequence MKFKATYDGNHDT. The helical transmembrane segment at 93-110 threads the bilayer; sequence FRVEFLVVPVGGLSVLVN. The Lumenal portion of the chain corresponds to 111-116; it reads HDFSPL. A helical transmembrane segment spans residues 117 to 135; it reads EILWTFSIYLESVAILPQL. At 136-149 the chain is on the cytoplasmic side; the sequence is FMISKTGEAETITT. The chain crosses the membrane as a helical span at residues 150–168; that stretch reads HYLFFLGLYRALYLFNWIW. Residues 159 to 169 are interaction with the K-D-E-L motif on target proteins; it reads RALYLFNWIWR. Topologically, residues 169–178 are lumenal; that stretch reads RYSFEGFFDL. The helical transmembrane segment at 179 to 199 threads the bilayer; the sequence is IAIVAGVVQTILYCDFFYLYV. Topologically, residues 200–212 are cytoplasmic; it reads TKVLKGKKLSLPA. Positions 204–207 are important for recycling of cargo proteins with the sequence motif K-D-E-L from the Golgi to the endoplasmic reticulum; it reads KGKK.

Belongs to the ERD2 family.

Its subcellular location is the endoplasmic reticulum membrane. It is found in the golgi apparatus membrane. The protein localises to the cytoplasmic vesicle. It localises to the COPI-coated vesicle membrane. Its function is as follows. Receptor for the C-terminal sequence motif K-D-E-L that is present on endoplasmic reticulum resident proteins and that mediates their recycling from the Golgi back to the endoplasmic reticulum. Binding is pH dependent, and is optimal at pH 5-5.4. This Xenopus tropicalis (Western clawed frog) protein is ER lumen protein-retaining receptor 2 (kdelr2).